The following is a 598-amino-acid chain: MDNTNRPHLNLGTNDTRMAPNDRTYPTTPSTFPQPVFPGQQAGGSQQYNQAYAQSGNYYQQNHNDPNTGLAHQFAHQNIGSAGRASPYGSRGPSPAQRPRTSGNSGQQQTYGNYLSAPMPSNTQTEFAPAPERNPDKYGPNANNNQKKCSQLASDFFKDSVKRARERNQRQSEMEQKLGETNDARRRESIWSTAGRKEGQYLRFLRTKDKPENYQTIKIIGKGAFGEVKLVQKKADGKVYAMKSLIKTEMFKKDQLAHVRAERDILAESDSPWVVKLYTTFQDANFLYMLMEFLPGGDLMTMLIKYEIFSEDITRFYIAEIVLAIDAVHKLGFIHRDIKPDNILLDRGGHVKLTDFGLSTGFHKLHDNNYYTQLLQGKSNKPRDNRNSVAIDQINLTVSNRAQINDWRRSRRLMAYSTVGTPDYIAPEIFTGHGYSFDCDWWSLGTIMFECLVGWPPFCAEDSHDTYRKIVNWRHSLYFPDDITLGVDAENLIRSLICNTENRLGRGGAHEIKSHAFFRGVEFDSLRRIRAPFEPRLTSAIDTTYFPTDEIDQTDNATLLKAQQAARGAAAPAQQEESPELSLPFIGYTFKRFDNNFR.

3 stretches are compositionally biased toward polar residues: residues 1-16 (MDNT…TNDT), 24-33 (TYPTTPSTFP), and 99-126 (PRTS…TQTE). Disordered regions lie at residues 1 to 46 (MDNT…GGSQ), 80 to 148 (GSAG…NQKK), and 163 to 190 (RARE…RESI). The Protein kinase domain occupies 214 to 518 (YQTIKIIGKG…AHEIKSHAFF (305 aa)). Residues 220–228 (IGKGAFGEV) and K243 contribute to the ATP site. The active-site Proton acceptor is the D337. Residues 519 to 598 (RGVEFDSLRR…TFKRFDNNFR (80 aa)) form the AGC-kinase C-terminal domain.

Belongs to the protein kinase superfamily. STE Ser/Thr protein kinase family. COT1 subfamily.

It catalyses the reaction L-seryl-[protein] + ATP = O-phospho-L-seryl-[protein] + ADP + H(+). The catalysed reaction is L-threonyl-[protein] + ATP = O-phospho-L-threonyl-[protein] + ADP + H(+). Functionally, protein kinase required for hyphal elongation. The protein is Serine/threonine-protein kinase cot-1 (cot-1) of Neurospora crassa (strain ATCC 24698 / 74-OR23-1A / CBS 708.71 / DSM 1257 / FGSC 987).